A 293-amino-acid polypeptide reads, in one-letter code: N-acetylneuraminate lyase (293 aa).

Aceneuramate-binding residues include S48 and S49. Y137 serves as the catalytic Proton donor. K165 serves as the catalytic Schiff-base intermediate with substrate. Aceneuramate-binding residues include T167, G189, D191, E192, and S208.

The protein belongs to the DapA family. NanA subfamily. As to quaternary structure, homotetramer.

The protein resides in the cytoplasm. It catalyses the reaction aceneuramate = aldehydo-N-acetyl-D-mannosamine + pyruvate. Its pathway is amino-sugar metabolism; N-acetylneuraminate degradation; D-fructose 6-phosphate from N-acetylneuraminate: step 1/5. Catalyzes the reversible aldol cleavage of N-acetylneuraminic acid (sialic acid; Neu5Ac) to form pyruvate and N-acetylmannosamine (ManNAc) via a Schiff base intermediate. This Staphylococcus aureus (strain bovine RF122 / ET3-1) protein is N-acetylneuraminate lyase.